The chain runs to 261 residues: uncharacterized protein (261 aa).

This is an uncharacterized protein from Haemophilus influenzae (strain ATCC 51907 / DSM 11121 / KW20 / Rd).